The primary structure comprises 161 residues: MKYDTSELCDIYQEDVNVVEPLFSNFGGRSSFGGQIITVKCFEDNGLLYDLLEQNGRGHILLIDGGGSVRRALIDADLARLAVQNEWEGLVVYGAVRQVDDLEELDIGIQALAAIPVGAAGEGIGESDVRVNFGGVTFFSGDHLYADNTGMILSEDPLDIE.

Belongs to the RraA family. Homotrimer. Binds to both RNA-binding sites in the C-terminal region of Rne and to RhlB.

The protein localises to the cytoplasm. Functionally, globally modulates RNA abundance by binding to RNase E (Rne) and regulating its endonucleolytic activity. Can modulate Rne action in a substrate-dependent manner by altering the composition of the degradosome. Modulates RNA-binding and helicase activities of the degradosome. The sequence is that of Regulator of ribonuclease activity A from Klebsiella pneumoniae (strain 342).